A 165-amino-acid polypeptide reads, in one-letter code: Crossover junction endodeoxyribonuclease RuvC (165 aa).

Residues D7, E66, and D138 contribute to the active site. Mg(2+) contacts are provided by D7, E66, and D138.

It belongs to the RuvC family. Homodimer which binds Holliday junction (HJ) DNA. The HJ becomes 2-fold symmetrical on binding to RuvC with unstacked arms; it has a different conformation from HJ DNA in complex with RuvA. In the full resolvosome a probable DNA-RuvA(4)-RuvB(12)-RuvC(2) complex forms which resolves the HJ. Requires Mg(2+) as cofactor.

Its subcellular location is the cytoplasm. It catalyses the reaction Endonucleolytic cleavage at a junction such as a reciprocal single-stranded crossover between two homologous DNA duplexes (Holliday junction).. The RuvA-RuvB-RuvC complex processes Holliday junction (HJ) DNA during genetic recombination and DNA repair. Endonuclease that resolves HJ intermediates. Cleaves cruciform DNA by making single-stranded nicks across the HJ at symmetrical positions within the homologous arms, yielding a 5'-phosphate and a 3'-hydroxyl group; requires a central core of homology in the junction. The consensus cleavage sequence is 5'-(A/T)TT(C/G)-3'. Cleavage occurs on the 3'-side of the TT dinucleotide at the point of strand exchange. HJ branch migration catalyzed by RuvA-RuvB allows RuvC to scan DNA until it finds its consensus sequence, where it cleaves and resolves the cruciform DNA. The protein is Crossover junction endodeoxyribonuclease RuvC of Ruegeria pomeroyi (strain ATCC 700808 / DSM 15171 / DSS-3) (Silicibacter pomeroyi).